The sequence spans 281 residues: Sulfur carrier protein FdhD (281 aa).

Cys117 acts as the Cysteine persulfide intermediate in catalysis.

The protein belongs to the FdhD family.

Its subcellular location is the cytoplasm. In terms of biological role, required for formate dehydrogenase (FDH) activity. Acts as a sulfur carrier protein that transfers sulfur from IscS to the molybdenum cofactor prior to its insertion into FDH. The sequence is that of Sulfur carrier protein FdhD from Xanthomonas axonopodis pv. citri (strain 306).